Consider the following 651-residue polypeptide: MSEKLYPVLPEAKKNTLIDNETYLEWYEESMSDPDGFWAKHGRRIDWFKPFTKVKNTDFNGDVTIKWYEDGVTNVSYNCIDRHLKSRGDKVAIIWEGDNPYIDKKITYRELYENVCRMANVLKKHGVKKGDRVTIYLPMIPEAAYAMLACARIGAVHSVVFAGFSPEALAGRIVDCESTFVITADEGVRGGKPVALKENTDTAIDIAAKQYVMVNKVLVVRRTGGKVSWGRGRDLWYHQEVASVEPHCEPEPMNAEDPLFILYTSGSTGKPKGVLHTTGGYLVYASMTHQYVFDYHDGEIYWCTADVGWVTGHSYIVYGPLANGATTLMFEGVPNFPDQGRFWEVVDKHHVNIFYTAPTALRALMGAGDEFVTRSSRSTLRLLGSVGEPINPEAWEWYYNVVGDQKCPIVDTWWQTENGGILITPLPGATDLKPGSATRPFFGVKPVLVDNEGNVQEGVADGNLCISDSWPGQMRTVYGDHKRFIETYFSTYKGMYFSGDGCRRDEDGYYWITGRVDDVLNISGHRLGTAEIESALVSHHSVSEAAVVGYPHPIKGQGIYCYVTLMTGADAQDPDELRKELVQHVRKEIGPIATPDKIQFAPGLPKTRSGKIMRRILRKIAEDEFGALGDTSTLADPGVVDDLIENRQNKK.

Residues 189-192 (RGGK), Thr-311, and Asn-335 each bind CoA. ATP-binding positions include 387–389 (GEP), 411–416 (DTWWQT), Asp-500, and Arg-515. Ser-523 serves as a coordination point for CoA. Arg-526 provides a ligand contact to ATP. Residues Val-537, His-539, and Val-542 each contribute to the Mg(2+) site. A CoA-binding site is contributed by Arg-586. Residue Lys-611 is modified to N6-acetyllysine.

This sequence belongs to the ATP-dependent AMP-binding enzyme family. Mg(2+) is required as a cofactor. Acetylated. Deacetylation by the SIR2-homolog deacetylase activates the enzyme.

The catalysed reaction is acetate + ATP + CoA = acetyl-CoA + AMP + diphosphate. In terms of biological role, catalyzes the conversion of acetate into acetyl-CoA (AcCoA), an essential intermediate at the junction of anabolic and catabolic pathways. AcsA undergoes a two-step reaction. In the first half reaction, AcsA combines acetate with ATP to form acetyl-adenylate (AcAMP) intermediate. In the second half reaction, it can then transfer the acetyl group from AcAMP to the sulfhydryl group of CoA, forming the product AcCoA. This is Acetyl-coenzyme A synthetase from Brucella suis (strain ATCC 23445 / NCTC 10510).